Here is a 406-residue protein sequence, read N- to C-terminus: Flavohemoprotein (406 aa).

Positions Val-6 to Lys-144 constitute a Globin domain. His-91 lines the heme b pocket. Active-site charge relay system residues include Tyr-101 and Glu-143. The reductase stretch occupies residues Gly-155–Lys-406. Residues Thr-158–Asp-267 enclose the FAD-binding FR-type domain. Residues Tyr-196 and Arg-212–Ser-215 contribute to the FAD site. Residue Gly-280–Pro-285 participates in NADP(+) binding. Leu-397–Pro-400 lines the FAD pocket.

This sequence belongs to the globin family. Two-domain flavohemoproteins subfamily. It in the C-terminal section; belongs to the flavoprotein pyridine nucleotide cytochrome reductase family. Heme b is required as a cofactor. It depends on FAD as a cofactor.

It carries out the reaction 2 nitric oxide + NADPH + 2 O2 = 2 nitrate + NADP(+) + H(+). The catalysed reaction is 2 nitric oxide + NADH + 2 O2 = 2 nitrate + NAD(+) + H(+). Its function is as follows. Is involved in NO detoxification in an aerobic process, termed nitric oxide dioxygenase (NOD) reaction that utilizes O(2) and NAD(P)H to convert NO to nitrate, which protects the bacterium from various noxious nitrogen compounds. Therefore, plays a central role in the inducible response to nitrosative stress. The protein is Flavohemoprotein of Oceanobacillus iheyensis (strain DSM 14371 / CIP 107618 / JCM 11309 / KCTC 3954 / HTE831).